A 246-amino-acid polypeptide reads, in one-letter code: 1-(5-phosphoribosyl)-5-[(5-phosphoribosylamino)methylideneamino] imidazole-4-carboxamide isomerase (246 aa).

The Proton acceptor role is filled by Asp8. Residue Asp131 is the Proton donor of the active site.

Belongs to the HisA/HisF family.

It localises to the cytoplasm. It catalyses the reaction 1-(5-phospho-beta-D-ribosyl)-5-[(5-phospho-beta-D-ribosylamino)methylideneamino]imidazole-4-carboxamide = 5-[(5-phospho-1-deoxy-D-ribulos-1-ylimino)methylamino]-1-(5-phospho-beta-D-ribosyl)imidazole-4-carboxamide. The protein operates within amino-acid biosynthesis; L-histidine biosynthesis; L-histidine from 5-phospho-alpha-D-ribose 1-diphosphate: step 4/9. This is 1-(5-phosphoribosyl)-5-[(5-phosphoribosylamino)methylideneamino] imidazole-4-carboxamide isomerase from Lactococcus lactis subsp. cremoris (strain MG1363).